A 590-amino-acid polypeptide reads, in one-letter code: Major surface protein MspTL (590 aa).

Residues 1 to 19 (MKKILAFFLVFALAGAVFA) form the signal peptide.

It is found in the cell outer membrane. Functionally, major component of the outer membrane. This chain is Major surface protein MspTL (mspTL), found in Treponema lecithinolyticum.